The chain runs to 772 residues: UDP-N-acetylmuramoyl-L-alanyl-D-glutamate--2,6-diaminopimelate ligase MurE homolog, chloroplastic (772 aa).

A chloroplast-targeting transit peptide spans 1 to 40; the sequence is MAFTFLSPHPVFLSLTGTTSSFSYKPVLLPFSRNSRTLTV. 2 disordered regions span residues 42–87 and 141–168; these read AGPA…KLEE and LLKPNPPKTASLKKIGEEGNEEEGDVTD. Acidic residues-rich tracts occupy residues 54–63 and 158–168; these read ADDDPPEAPE and EGNEEEGDVTD. At S194 the chain carries Phosphoserine.

The protein belongs to the MurCDEF family. MurE subfamily. Component of the plastid-encoded plastid RNA polymerase (PEP) complex. As to expression, expressed in leaves and flowers.

It is found in the plastid. It localises to the chloroplast. Involved in chloroplast biogenesis. Required for thylakoid membrane development. Seems to be required for plastid-encoded plastid RNA polymerase (PEP)-dependent gene expression. The chain is UDP-N-acetylmuramoyl-L-alanyl-D-glutamate--2,6-diaminopimelate ligase MurE homolog, chloroplastic from Arabidopsis thaliana (Mouse-ear cress).